We begin with the raw amino-acid sequence, 453 residues long: Beta-agarase AgaB34 (453 aa).

An N-terminal signal peptide occupies residues 1–23 (MKGFTKHSILMACSIGLAINATA). A GH16 domain is found at 24–301 (ADWDNIPIPA…WIRVYKPTGG (278 aa)). The active-site Nucleophile is the Glu-147. Glu-152 serves as the catalytic Proton donor. Residues 313-453 (PSGYTNLQLA…GATNQRFKFL (141 aa)) enclose the Ricin B-type lectin domain. 3 disulfide bridges follow: Cys-327-Cys-346, Cys-375-Cys-394, and Cys-423-Cys-442.

This sequence belongs to the glycosyl hydrolase 16 family.

The protein resides in the secreted. It catalyses the reaction Hydrolysis of (1-&gt;4)-beta-D-galactosidic linkages in agarose, giving the tetramer as the predominant product.. The chain is Beta-agarase AgaB34 from Agarivorans albus.